Reading from the N-terminus, the 273-residue chain is Patr class II histocompatibility antigen, DO beta chain (273 aa).

The N-terminal stretch at 1 to 26 is a signal peptide; the sequence is MGSGWVPWVVALLVNLTRLDSSMTQG. The tract at residues 27–120 is beta-1; it reads TDSPEDFVIQ…LGAPFTVGRK (94 aa). Residues 27–224 lie on the Extracellular side of the membrane; that stretch reads TDSPEDFVIQ…RAQSEYSWKK (198 aa). 2 cysteine pairs are disulfide-bonded: Cys41–Cys105 and Cys143–Cys199. Residue Asn45 is glycosylated (N-linked (GlcNAc...) asparagine). A beta-2 region spans residues 121-214; sequence VQPEVTVYPE…SLLSPVSVEW (94 aa). An Ig-like C1-type domain is found at 123–213; it reads PEVTVYPERT…SSLLSPVSVE (91 aa). The tract at residues 215–224 is connecting peptide; the sequence is RAQSEYSWKK. A helical transmembrane segment spans residues 225–245; it reads MLSGIAAFLLGLIFLLVGIVI. Residues 246–273 lie on the Cytoplasmic side of the membrane; sequence QLRAQKGYVRTQMSGNEVSRAVLLPQSC.

It belongs to the MHC class II family. In terms of assembly, heterodimer of an alpha chain (DOA) and a beta chain (DOB). Forms a heterotetrameric complex with an HLA-DM molecule during intracellular transport in endosomal/lysosomal compartments in B-cells.

The protein localises to the endosome membrane. It is found in the lysosome membrane. In terms of biological role, important modulator in the HLA class II restricted antigen presentation pathway by interaction with the HLA-DM molecule in B-cells. Modifies peptide exchange activity of HLA-DM. The sequence is that of Patr class II histocompatibility antigen, DO beta chain (Patr-DOB) from Pan troglodytes (Chimpanzee).